The chain runs to 314 residues: Probable 5-dehydro-4-deoxyglucarate dehydratase (314 aa).

Belongs to the DapA family.

It catalyses the reaction 5-dehydro-4-deoxy-D-glucarate + H(+) = 2,5-dioxopentanoate + CO2 + H2O. It participates in carbohydrate acid metabolism; D-glucarate degradation; 2,5-dioxopentanoate from D-glucarate: step 2/2. The protein is Probable 5-dehydro-4-deoxyglucarate dehydratase of Bradyrhizobium sp. (strain ORS 278).